The sequence spans 289 residues: T-cell ecto-ADP-ribosyltransferase 2 (289 aa).

The first 20 residues, 1–20 (MTSKIFKFFLTWWLTQQVTG), serve as a signal peptide directing secretion. Disulfide bonds link Cys41–Cys246 and Cys141–Cys193. One can recognise a TR mART core domain in the interval 61–241 (EELKLEWEKA…IFLDSPERKK (181 aa)). Residue Asn79 is glycosylated (N-linked (GlcNAc...) asparagine). Positions 98, 146, and 164 each coordinate NAD(+). Arg146 is a catalytic residue. Ser167 is an active-site residue. Ser202 is an NAD(+) binding site. The active site involves Glu209. The N-linked (GlcNAc...) asparagine glycan is linked to Asn249. The GPI-anchor amidated serine moiety is linked to residue Ser260. A propeptide spans 261–289 (ISGSRESCVSLFLVVLLGLLVQQLTLAEL) (removed in mature form).

The protein belongs to the Arg-specific ADP-ribosyltransferase family. Expressed in spleen, intestine and thymus.

Its subcellular location is the cell membrane. It catalyses the reaction L-arginyl-[protein] + NAD(+) = N(omega)-(ADP-D-ribosyl)-L-arginyl-[protein] + nicotinamide + H(+). The catalysed reaction is NAD(+) + H2O = ADP-D-ribose + nicotinamide + H(+). Functionally, has both NAD(+) glycohydrolase and ADP-ribosyltransferase activity. The sequence is that of T-cell ecto-ADP-ribosyltransferase 2 (Art2b) from Mus musculus (Mouse).